The sequence spans 158 residues: Ribosome maturation factor RimP (158 aa).

The protein belongs to the RimP family.

It localises to the cytoplasm. In terms of biological role, required for maturation of 30S ribosomal subunits. The chain is Ribosome maturation factor RimP from Lactiplantibacillus plantarum (strain ATCC BAA-793 / NCIMB 8826 / WCFS1) (Lactobacillus plantarum).